The following is a 208-amino-acid chain: Large ribosomal subunit protein uL3 (208 aa).

At Gln-149 the chain carries N5-methylglutamine.

This sequence belongs to the universal ribosomal protein uL3 family. As to quaternary structure, part of the 50S ribosomal subunit. Forms a cluster with proteins L14 and L19. Methylated by PrmB.

In terms of biological role, one of the primary rRNA binding proteins, it binds directly near the 3'-end of the 23S rRNA, where it nucleates assembly of the 50S subunit. This chain is Large ribosomal subunit protein uL3, found in Haemophilus influenzae (strain 86-028NP).